The primary structure comprises 154 residues: Superoxide dismutase [Cu-Zn] (154 aa).

Cu cation is bound by residues H47, H49, and H64. The cysteines at positions 58 and 147 are disulfide-linked. The Zn(2+) site is built by H64, H72, H81, and D84. A Cu cation-binding site is contributed by H121. The span at 124–137 (TDDLGKGENEESKK) shows a compositional bias: basic and acidic residues. Residues 124 to 144 (TDDLGKGENEESKKTGNAGTR) form a disordered region. R144 contacts substrate.

This sequence belongs to the Cu-Zn superoxide dismutase family. Homodimer. Requires Cu cation as cofactor. The cofactor is Zn(2+).

The protein resides in the cytoplasm. It catalyses the reaction 2 superoxide + 2 H(+) = H2O2 + O2. Its function is as follows. Destroys radicals which are normally produced within the cells and which are toxic to biological systems. The polypeptide is Superoxide dismutase [Cu-Zn] (sod1) (Botryotinia fuckeliana (Noble rot fungus)).